The chain runs to 289 residues: Oxaloacetate decarboxylase 1 (289 aa).

Ser-50 contributes to the substrate binding site. Residue Asp-88 coordinates Mg(2+). Substrate-binding residues include Arg-159 and His-235.

Belongs to the isocitrate lyase/PEP mutase superfamily. Oxaloacetate decarboxylase family. Homotetramer; dimer of dimers. It depends on Mg(2+) as a cofactor.

The catalysed reaction is oxaloacetate + H(+) = pyruvate + CO2. Functionally, catalyzes the decarboxylation of oxaloacetate into pyruvate. Seems to play a role in maintaining cellular concentrations of bicarbonate and pyruvate. This chain is Oxaloacetate decarboxylase 1, found in Pseudomonas putida (strain W619).